Reading from the N-terminus, the 491-residue chain is Cytochrome P450 2F1 (491 aa).

Cysteine 436 provides a ligand contact to heme.

The protein belongs to the cytochrome P450 family. Requires heme as cofactor. As to expression, expressed in lung. Rarely detected in liver and placenta.

The protein localises to the endoplasmic reticulum membrane. It localises to the microsome membrane. The catalysed reaction is an organic molecule + reduced [NADPH--hemoprotein reductase] + O2 = an alcohol + oxidized [NADPH--hemoprotein reductase] + H2O + H(+). Functionally, may be involved in the metabolism of various pneumotoxicants including naphthalene. Is able to dealkylate ethoxycoumarin, propoxycoumarin, and pentoxyresorufin but possesses no activity toward ethoxyresorufin and only trace dearylation activity toward benzyloxyresorufin. Bioactivates 3-methylindole (3MI) by dehydrogenation to the putative electrophile 3-methylene-indolenine. In Homo sapiens (Human), this protein is Cytochrome P450 2F1 (CYP2F1).